Reading from the N-terminus, the 251-residue chain is Octanoyltransferase (251 aa).

The BPL/LPL catalytic domain maps to 29–216 (GVIQDTLLLL…NFGFIFKEQV (188 aa)). Residues 74 to 81 (RGGDVTFH), 146 to 148 (AIG), and 159 to 161 (GFA) each bind substrate. The active-site Acyl-thioester intermediate is the Cys-177.

This sequence belongs to the LipB family.

Its subcellular location is the cytoplasm. It carries out the reaction octanoyl-[ACP] + L-lysyl-[protein] = N(6)-octanoyl-L-lysyl-[protein] + holo-[ACP] + H(+). It participates in protein modification; protein lipoylation via endogenous pathway; protein N(6)-(lipoyl)lysine from octanoyl-[acyl-carrier-protein]: step 1/2. In terms of biological role, catalyzes the transfer of endogenously produced octanoic acid from octanoyl-acyl-carrier-protein onto the lipoyl domains of lipoate-dependent enzymes. Lipoyl-ACP can also act as a substrate although octanoyl-ACP is likely to be the physiological substrate. In Koribacter versatilis (strain Ellin345), this protein is Octanoyltransferase.